Reading from the N-terminus, the 462-residue chain is Metal cation symporter ZIP14 (462 aa).

Residues 1 to 16 (MPLLLLSALLPFSLMA) form the signal peptide. Over 17-138 (GPTPSTGKEL…PSPGEVWGYG (122 aa)) the chain is Extracellular. Residues N42, N68, N83, and N119 are each glycosylated (N-linked (GlcNAc...) asparagine). Residues 139–159 (FLCVTVISLCSLFGAGVVPFM) traverse the membrane as a helical segment. Residues 160-167 (KKACYKRL) lie on the Cytoplasmic side of the membrane. A helical transmembrane segment spans residues 168-188 (LLFCIALAIGTLFSNALFQLI). Topologically, residues 189 to 201 (PEAFGFNPLEDSY) are extracellular. A helical transmembrane segment spans residues 202 to 222 (VFTSSVIFGGFYLFFFTEKVL). Residues 223–322 (KMMLKQKHEH…SDGLHNFIDG (100 aa)) lie on the Cytoplasmic side of the membrane. The HHHGHXHX-motif motif lies at 230 to 237 (HEHGHSHY). A disordered region spans residues 235-285 (SHYSADTSKRDAEEGVTEKLQNGDLDHMIPPPHGSESDLRGDEKAVQQQDL). 2 stretches are compositionally biased toward basic and acidic residues: residues 241-251 (TSKRDAEEGVT) and 269-279 (SESDLRGDEKA). The chain crosses the membrane as a helical span at residues 323–343 (LAIGASFTVSVFQGVSTSIAI). Residues 344 to 367 (LCEEFPHELGDFVILLNAGMSIPQ) lie on the Extracellular side of the membrane. Residues 346-351 (EEFPHE) carry the XEXPHE-motif motif. The chain crosses the membrane as a helical span at residues 368–388 (ALFFNFLSACCCYLGLAFGIL). The Cytoplasmic portion of the chain corresponds to 389–396 (AGSHFSSN). The helical transmembrane segment at 397-417 (WIFALAGGMFLYIALSDMFPE) threads the bilayer. At 418-431 (MNEVSKEDEEGGRA) the chain is on the extracellular side. Residues 432–452 (FSAFMIQNAGLLTGFAIMLLL) form a helical membrane-spanning segment. The Cytoplasmic segment spans residues 453–462 (TTFSGQIQLG).

Belongs to the ZIP transporter (TC 2.A.5) family. In terms of assembly, homotrimer.

Its subcellular location is the cell membrane. The protein resides in the apical cell membrane. It is found in the basolateral cell membrane. The protein localises to the early endosome membrane. It localises to the late endosome membrane. Its subcellular location is the lysosome membrane. The catalysed reaction is Zn(2+)(out) + 2 hydrogencarbonate(out) = Zn(2+)(in) + 2 hydrogencarbonate(in). The enzyme catalyses Mn(2+)(out) + 2 hydrogencarbonate(out) = Mn(2+)(in) + 2 hydrogencarbonate(in). It catalyses the reaction Fe(2+)(out) + 2 hydrogencarbonate(out) = Fe(2+)(in) + 2 hydrogencarbonate(in). It carries out the reaction Cd(2+)(out) + 2 hydrogencarbonate(out) = Cd(2+)(in) + 2 hydrogencarbonate(in). Its function is as follows. Electroneutral transporter of the plasma membrane mediating the cellular uptake of the divalent metal cations zinc, manganese and iron that are important for tissue homeostasis, metabolism, development and immunity. Functions as an energy-dependent symporter, transporting through the membranes an electroneutral complex composed of a divalent metal cation and two bicarbonate anions. Beside these endogenous cellular substrates, can also import cadmium a non-essential metal which is cytotoxic and carcinogenic. The sequence is that of Metal cation symporter ZIP14 from Xenopus tropicalis (Western clawed frog).